The primary structure comprises 37 residues: Large ribosomal subunit protein bL36 (37 aa).

Belongs to the bacterial ribosomal protein bL36 family.

In Gloeothece citriformis (strain PCC 7424) (Cyanothece sp. (strain PCC 7424)), this protein is Large ribosomal subunit protein bL36.